A 169-amino-acid chain; its full sequence is Peptide deformylase (169 aa).

2 residues coordinate Fe cation: Cys-91 and His-133. Glu-134 is a catalytic residue. His-137 provides a ligand contact to Fe cation.

Belongs to the polypeptide deformylase family. It depends on Fe(2+) as a cofactor.

The enzyme catalyses N-terminal N-formyl-L-methionyl-[peptide] + H2O = N-terminal L-methionyl-[peptide] + formate. Its function is as follows. Removes the formyl group from the N-terminal Met of newly synthesized proteins. Requires at least a dipeptide for an efficient rate of reaction. N-terminal L-methionine is a prerequisite for activity but the enzyme has broad specificity at other positions. The polypeptide is Peptide deformylase (Shigella boydii serotype 18 (strain CDC 3083-94 / BS512)).